A 185-amino-acid polypeptide reads, in one-letter code: Protein DP71L (185 aa).

Residues 1–15 are compositionally biased toward basic residues; that stretch reads MSRRNKKRSRRRRKK. Positions 1–38 are disordered; sequence MSRRNKKRSRRRRKKPLNDIQPGPSKSSAQDEPIKSVS. Important for host CHOP inhibition regions lie at residues 126-128 and 170-174; these read VHF and LSTVF.

Belongs to the asfivirus DP71L family. Interacts (via C-terminus) with host PPP1CB.

Functionally, interacts with the host phosphatase PP1 catalytic subunit (PPP1CB) and recruits it to dephosphorylate EIF2S1/eIF2alpha and therefore restores the host translation that has been shut-down by the host. Also inhibits the EIF2S1/eIF2alpha-ATF4-DDIT3/CHOP pathway. The polypeptide is Protein DP71L (African swine fever virus (isolate Pig/Kenya/KEN-50/1950) (ASFV)).